Reading from the N-terminus, the 146-residue chain is Large ribosomal subunit protein uL15 (146 aa).

The tract at residues 1–56 (MKLHELRAAEGANKASKRVGRGTGSGLGKTSGRGQNGQNSRSGGGVRPGFEGGQMP) is disordered. Composition is skewed to gly residues over residues 21-35 (RGTGSGLGKTSGRGQ) and 42-52 (SGGGVRPGFEG).

It belongs to the universal ribosomal protein uL15 family. In terms of assembly, part of the 50S ribosomal subunit.

Its function is as follows. Binds to the 23S rRNA. The protein is Large ribosomal subunit protein uL15 of Clostridium botulinum (strain Okra / Type B1).